The following is a 391-amino-acid chain: Ferrochelatase (391 aa).

Positions 196 and 281 each coordinate Fe cation.

The protein belongs to the ferrochelatase family.

Its subcellular location is the cytoplasm. It catalyses the reaction heme b + 2 H(+) = protoporphyrin IX + Fe(2+). It participates in porphyrin-containing compound metabolism; protoheme biosynthesis; protoheme from protoporphyrin-IX: step 1/1. Its function is as follows. Catalyzes the ferrous insertion into protoporphyrin IX. The polypeptide is Ferrochelatase (Prochlorococcus marinus (strain NATL1A)).